The sequence spans 344 residues: Follistatin (344 aa).

The N-terminal stretch at 1–29 (MVRPRHQPGGLCLLLLLLCQFMEDRSAQA) is a signal peptide. One can recognise a TB domain in the interval 30-103 (GNCWLRQAKN…TCDNVDCGPG (74 aa)). Disulfide bonds link C32/C55, C42/C88, C56/C91, C95/C106, C100/C116, C118/C150, C122/C143, C132/C164, C168/C179, C173/C189, C192/C225, C196/C218, C207/C239, C245/C256, C250/C267, C270/C302, C274/C295, and C284/C316. A Follistatin-like 1 domain is found at 94 to 117 (TCDNVDCGPGKKCRMNKKNKPRCV). The 55-residue stretch at 112–166 (NKPRCVCAPDCSNITWKGPVCGLDGKTYRNECALLKARCKEQPELEVQYQGKCKK) folds into the Kazal-like 1 domain. A glycan (N-linked (GlcNAc...) asparagine) is linked at N124. A Follistatin-like 2 domain is found at 167-190 (TCRDVNCPGSSTCVVDQTNNAYCV). The 56-residue stretch at 186-241 (NAYCVTCNRICPEPTSSEQYLCGNDGVTYSSACHLRKATCLLGRSIGLAYEGKCIK) folds into the Kazal-like 2 domain. One can recognise a Follistatin-like 3 domain in the interval 244-268 (SCEDIQCTGGKKCLWDFKVGRGRCS). In terms of domain architecture, Kazal-like 3 spans 264–318 (RGRCSLCDELCPDSKSEEPVCASDNATYASECAMKEAACSSGVLLEVKHSGSCNS). N288 carries N-linked (GlcNAc...) asparagine glycosylation. Positions 314 to 344 (GSCNSISEDTEEEEEDEDQDYSFPISSILEW) are disordered. A compositionally biased stretch (acidic residues) spans 321–333 (EDTEEEEEDEDQD).

Interacts with GDF11. Interacts with activin A/INHBA. Interacts with myostatin/MSTN.

The protein resides in the secreted. It is found in the nucleus. The protein localises to the nucleolus. Its function is as follows. Multifunctional regulatory protein whose primary function is to antagonize members of the transforming growth factor beta (TGF-beta) superfamily including activin, myostatin, GDF11 or bone morphogenetic proteins (BMPs). Mechanistically, binds to these ligands in the extracellular space, blocking their type II receptor-binding site to inhibit downstream signaling. Plays an essential role in muscle fiber formation and growth both by preventing the repressive effects of myostatin and through SMAD3/AKT/mTOR signaling independently of myostatin. Also promotes neural differentiation by antagonizing the action BMP4. Acts as a specific inhibitor of the biosynthesis and secretion of pituitary follicle stimulating hormone (FSH) by sequestering activin A/INHBA. On the other hand, translocates into the nucleus where it down-regulates rRNA synthesis and ribosome biogenesis to maintain cellular energy homeostasis by binding to rDNA. This chain is Follistatin, found in Equus caballus (Horse).